The following is a 227-amino-acid chain: Orotate phosphoribosyltransferase 2 (227 aa).

An orotate-binding site is contributed by 41-42 (FF). 5-phospho-alpha-D-ribose 1-diphosphate contacts are provided by residues 79-80 (YK), arginine 109, lysine 110, lysine 113, histidine 115, and 135-143 (DDVMTAGTA). Residues threonine 139 and arginine 167 each contribute to the orotate site.

The protein belongs to the purine/pyrimidine phosphoribosyltransferase family. PyrE subfamily. As to quaternary structure, homodimer.

It carries out the reaction orotidine 5'-phosphate + diphosphate = orotate + 5-phospho-alpha-D-ribose 1-diphosphate. The protein operates within pyrimidine metabolism; UMP biosynthesis via de novo pathway; UMP from orotate: step 1/2. Its function is as follows. Catalyzes the transfer of a ribosyl phosphate group from 5-phosphoribose 1-diphosphate to orotate, leading to the formation of orotidine monophosphate (OMP). This is Orotate phosphoribosyltransferase 2 (URA10) from Saccharomyces cerevisiae (strain ATCC 204508 / S288c) (Baker's yeast).